The chain runs to 337 residues: Eukaryotic translation initiation factor 3 subunit H (337 aa).

An MPN domain is found at 21 to 153 (VQCDGLAVMK…LKAYRLTPQA (133 aa)).

It belongs to the eIF-3 subunit H family. As to quaternary structure, component of the eukaryotic translation initiation factor 3 (eIF-3) complex. The eIF-3 complex interacts with pix. Interacts with mxt.

It is found in the cytoplasm. Component of the eukaryotic translation initiation factor 3 (eIF-3) complex, which is involved in protein synthesis of a specialized repertoire of mRNAs and, together with other initiation factors, stimulates binding of mRNA and methionyl-tRNAi to the 40S ribosome. The eIF-3 complex specifically targets and initiates translation of a subset of mRNAs involved in cell proliferation. This Drosophila willistoni (Fruit fly) protein is Eukaryotic translation initiation factor 3 subunit H.